The primary structure comprises 243 residues: MILEVLMSQSVTIKSNKYGINLILDADMPFADLIKAVVEKFKASANFFKNAKLAISFEGRHLSDEEQQQIIAAIEENTTIEILCIVESGTEQEAIMKEQVEAFNEAVQKQCENVATVSVPEQFYRGTLRSGQVITSESSVTIIGDVNPGAKIIAQGNIVILGALKGNVHAGCTGDRSCFVFALDMQPIQIQIGDLIAKSPDEPQPKHRVRRKEKPAQEQAQIAIAKDGYIYIEPITKNILNSI.

It belongs to the MinC family. As to quaternary structure, interacts with MinD and FtsZ.

Its function is as follows. Cell division inhibitor that blocks the formation of polar Z ring septums. Rapidly oscillates between the poles of the cell to destabilize FtsZ filaments that have formed before they mature into polar Z rings. Prevents FtsZ polymerization. This Agathobacter rectalis (strain ATCC 33656 / DSM 3377 / JCM 17463 / KCTC 5835 / VPI 0990) (Eubacterium rectale) protein is Probable septum site-determining protein MinC.